Consider the following 92-residue polypeptide: Small ribosomal subunit protein uS19 (92 aa).

The protein belongs to the universal ribosomal protein uS19 family.

Its function is as follows. Protein S19 forms a complex with S13 that binds strongly to the 16S ribosomal RNA. In Prochlorococcus marinus (strain MIT 9301), this protein is Small ribosomal subunit protein uS19.